The chain runs to 720 residues: Phenylalanine--tRNA ligase beta subunit, chloroplastic (720 aa).

The region spanning 319-404 (NSTLNIDISL…RVYGYNQFQS (86 aa)) is the B5 domain. Mg(2+) is bound by residues aspartate 382, aspartate 388, glutamate 391, and glutamate 392. One can recognise an FDX-ACB domain in the interval 626–719 (SKYPCITRDL…IIKKLNLEIR (94 aa)).

The protein belongs to the phenylalanyl-tRNA synthetase beta subunit family. Type 1 subfamily. As to quaternary structure, tetramer of two alpha and two beta subunits. Mg(2+) is required as a cofactor.

The protein resides in the plastid. The protein localises to the chloroplast. It carries out the reaction tRNA(Phe) + L-phenylalanine + ATP = L-phenylalanyl-tRNA(Phe) + AMP + diphosphate + H(+). The protein is Phenylalanine--tRNA ligase beta subunit, chloroplastic (pheT) of Porphyra purpurea (Red seaweed).